The primary structure comprises 288 residues: MKTIFEALKWASSYLTEAGREENAAELLLLYDTGMERSKLLASLQEPIGEDELYRFKRHVEMHKEGVPVQYIIGKEFFYGREFMVNDDVLIPRPETEEVVFHLLEKYRSVFSEDGKLEVVDVGTGSGAIAVTLALENQSFSVSAVDISKEALQVASANAEKLGANVRFYQGDLLEPFIKAGKKADIIVSNPPYISEEEMADLSEIVRFHEPLHALTDGGDGLKFYKRFMEDIPLVMKDKVFVVFEIGWKQGAAVKDLILKAFKGAEVEVLKDINGKDRTICALIHKNK.

S-adenosyl-L-methionine contacts are provided by residues 123–127, Asp146, and Asn190; that span reads GTGSG. 190–193 serves as a coordination point for substrate; it reads NPPY.

It belongs to the protein N5-glutamine methyltransferase family. PrmC subfamily.

The enzyme catalyses L-glutaminyl-[peptide chain release factor] + S-adenosyl-L-methionine = N(5)-methyl-L-glutaminyl-[peptide chain release factor] + S-adenosyl-L-homocysteine + H(+). Methylates the class 1 translation termination release factors RF1/PrfA and RF2/PrfB on the glutamine residue of the universally conserved GGQ motif. The protein is Release factor glutamine methyltransferase of Bacillus subtilis (strain 168).